Consider the following 155-residue polypeptide: MYCPFCHAEETKVVDSRLVADGAQVRRRRECLECHERFTTFETAELIMPLIIKRDGRREPFHIDNLRSGMLRALEKRPVSVDDLEKAIISITEEIRRRGEREIDSQMVGELVMKELFRLDHVAYVRFASVYKRFKDVSDFRQTIDQMKNEDKEKS.

A zinc finger lies at 3-34; sequence CPFCHAEETKVVDSRLVADGAQVRRRRECLEC. An ATP-cone domain is found at 49–139; sequence PLIIKRDGRR…VYKRFKDVSD (91 aa).

Belongs to the NrdR family. Requires Zn(2+) as cofactor.

Functionally, negatively regulates transcription of bacterial ribonucleotide reductase nrd genes and operons by binding to NrdR-boxes. The protein is Transcriptional repressor NrdR of Legionella pneumophila (strain Lens).